Here is a 433-residue protein sequence, read N- to C-terminus: Vesicle-associated protein (433 aa).

Repeat copies occupy residues G112 to G122 and G219 to G229. Residues G112–G350 form a 3 X 11 AA repeats of G-G-G-I-G-G-G-L-G-G-G region. The Nuclear localization signal signature appears at V266 to G274. Repeat 3 spans residues G340–G350. Disordered stretches follow at residues R366 to G389 and H411 to G433. The segment covering D423–G433 has biased composition (basic and acidic residues).

Egg cortex.

The protein resides in the microsome membrane. It localises to the nucleus. It is found in the endoplasmic reticulum membrane. May function as a multidomain RNA-binding protein. May play a role in nuclear RNA processing and in early development. The sequence is that of Vesicle-associated protein (VAP-1) from Strongylocentrotus purpuratus (Purple sea urchin).